Consider the following 294-residue polypeptide: Eukaryotic translation initiation factor 3 subunit F (294 aa).

The MPN domain maps to 20 to 163; the sequence is VTVTAQALFQ…IDPSKNSGNC (144 aa).

Belongs to the eIF-3 subunit F family. As to quaternary structure, component of the eukaryotic translation initiation factor 3 (eIF-3) complex.

The protein resides in the cytoplasm. Component of the eukaryotic translation initiation factor 3 (eIF-3) complex, which is involved in protein synthesis of a specialized repertoire of mRNAs and, together with other initiation factors, stimulates binding of mRNA and methionyl-tRNAi to the 40S ribosome. The eIF-3 complex specifically targets and initiates translation of a subset of mRNAs involved in cell proliferation. The polypeptide is Eukaryotic translation initiation factor 3 subunit F (Yarrowia lipolytica (strain CLIB 122 / E 150) (Yeast)).